A 443-amino-acid chain; its full sequence is uncharacterized protein (443 aa).

Positions 1-21 (MQSVTPPPTQQGKPDPTNSDM) are disordered. Over residues 10-20 (QQGKPDPTNSD) the composition is skewed to polar residues.

This is an uncharacterized protein from Caenorhabditis elegans.